We begin with the raw amino-acid sequence, 259 residues long: Glutathione S-transferase domain-containing protein DDB_G0274705 (259 aa).

Residues 7-96 (KIDYIFYTNN…YLAQKFNTFL (90 aa)) form the GST N-terminal domain. Residues 102–232 (NPLENSEVIT…GFKNFNPSLL (131 aa)) form the GST C-terminal domain.

Belongs to the GST superfamily.

The sequence is that of Glutathione S-transferase domain-containing protein DDB_G0274705 from Dictyostelium discoideum (Social amoeba).